A 257-amino-acid polypeptide reads, in one-letter code: Nickel import system ATP-binding protein NikD (257 aa).

In terms of domain architecture, ABC transporter spans 4-245; the sequence is IDIQNLTIKN…HLHPYTERLI (242 aa). 37–44 serves as a coordination point for ATP; that stretch reads GESGAGKS.

It belongs to the ABC transporter superfamily. In terms of assembly, the complex is composed of two ATP-binding proteins (NikD and NikE), two transmembrane proteins (NikB and NikC) and a solute-binding protein (NikA).

Its subcellular location is the cell membrane. It catalyses the reaction Ni(2+)(out) + ATP + H2O = Ni(2+)(in) + ADP + phosphate + H(+). Functionally, part of the ABC transporter complex NikABCDE (Opp2) involved in nickel import. Probably responsible for energy coupling to the transport system. In Staphylococcus aureus (strain MW2), this protein is Nickel import system ATP-binding protein NikD.